The primary structure comprises 46 residues: Esculentin-1R (46 aa).

A disulfide bridge links C40 with C46.

Expressed by the skin glands.

The protein resides in the secreted. Its function is as follows. Shows antibacterial activity against representative Gram-negative and Gram-positive bacterial species, and hemolytic activity. The sequence is that of Esculentin-1R from Pelophylax ridibundus (Marsh frog).